Consider the following 151-residue polypeptide: MADRYVLIEVNEDGEGRLKDEAVTWIDFRLSIVDFNASEGLNQLMEQISKDVKDELVLVLFNYRVKSSYDSWSGATEYEDFFDVEFFKVIKKNYKKFYQGLVTVELDVGINGFDNIESMPTDSNQNYYRNLIAEWEEFYNEDFIPLSLNKR.

This is an uncharacterized protein from Bacillus subtilis (strain 168).